The primary structure comprises 306 residues: Maltose operon periplasmic protein (306 aa).

Residues 1–22 (MKMNKSLIVLCLSAGLLASAPG) constitute a signal peptide (or 26).

The protein to S.typhimurium MalM.

Its subcellular location is the periplasm. Functionally, not yet known. Might function in the uptake of a still unidentified substrate. This Escherichia coli (strain K12) protein is Maltose operon periplasmic protein (malM).